Here is a 480-residue protein sequence, read N- to C-terminus: Glycogen synthase (480 aa).

Position 15 (Lys-15) interacts with ADP-alpha-D-glucose.

This sequence belongs to the glycosyltransferase 1 family. Bacterial/plant glycogen synthase subfamily.

The enzyme catalyses [(1-&gt;4)-alpha-D-glucosyl](n) + ADP-alpha-D-glucose = [(1-&gt;4)-alpha-D-glucosyl](n+1) + ADP + H(+). It functions in the pathway glycan biosynthesis; glycogen biosynthesis. In terms of biological role, synthesizes alpha-1,4-glucan chains using ADP-glucose. In Desulforamulus reducens (strain ATCC BAA-1160 / DSM 100696 / MI-1) (Desulfotomaculum reducens), this protein is Glycogen synthase.